Consider the following 473-residue polypeptide: Arginine biosynthesis bifunctional protein ArgJ, mitochondrial (473 aa).

Positions 201, 230, 241, 328, 468, and 473 each coordinate substrate. Thr-241 functions as the Nucleophile in the catalytic mechanism.

Belongs to the ArgJ family. In terms of assembly, heterodimer of an alpha and a beta chain. In terms of processing, the alpha and beta chains are autoproteolytically processed from a single precursor protein within the mitochondrion.

It localises to the mitochondrion matrix. It carries out the reaction N(2)-acetyl-L-ornithine + L-glutamate = N-acetyl-L-glutamate + L-ornithine. The catalysed reaction is L-glutamate + acetyl-CoA = N-acetyl-L-glutamate + CoA + H(+). Its pathway is amino-acid biosynthesis; L-arginine biosynthesis; L-ornithine and N-acetyl-L-glutamate from L-glutamate and N(2)-acetyl-L-ornithine (cyclic): step 1/1. It functions in the pathway amino-acid biosynthesis; L-arginine biosynthesis; N(2)-acetyl-L-ornithine from L-glutamate: step 1/4. Functionally, catalyzes two activities which are involved in the cyclic version of arginine biosynthesis: the synthesis of acetylglutamate from glutamate and acetyl-CoA, and of ornithine by transacetylation between acetylornithine and glutamate. In Blastomyces gilchristii (strain SLH14081) (Blastomyces dermatitidis), this protein is Arginine biosynthesis bifunctional protein ArgJ, mitochondrial.